The primary structure comprises 54 residues: Beta-2-microglobulin (54 aa).

The Ig-like C1-type domain occupies 3-41; the sequence is KVELSDLSFNKDWSFYLLAHREFVPTATDKYACRVSHIT.

This sequence belongs to the beta-2-microglobulin family. As to quaternary structure, heterodimer of an alpha chain and a beta chain. Beta-2-microglobulin is the beta-chain of major histocompatibility complex class I molecules.

It is found in the secreted. Its function is as follows. Component of the class I major histocompatibility complex (MHC). Involved in the presentation of peptide antigens to the immune system. The protein is Beta-2-microglobulin (B2M) of Mesocricetus auratus (Golden hamster).